A 101-amino-acid polypeptide reads, in one-letter code: Protein S100-A7A (101 aa).

2 EF-hand domains span residues 13-48 and 50-85; these read MIDMFHKYTGRDGKIEKPSLLTMMKENFPNFLSACD and KGIHYLATVFEKKDKNEDKKIDFSEFLSLLGDIAAD. Zn(2+) is bound by residues His18, Glu28, and Glu38. Ca(2+)-binding residues include Asp63 and Asn65. Glu66 is a binding site for Zn(2+). Asp67, Lys69, and Glu74 together coordinate Ca(2+). His87 and His91 together coordinate Zn(2+).

This sequence belongs to the S-100 family. As to expression, overexpressed in psoriasis.

The protein resides in the cytoplasm. Its function is as follows. May be involved in epidermal differentiation and inflammation and might therefore be important for the pathogenesis of psoriasis and other diseases. The protein is Protein S100-A7A (S100A7A) of Homo sapiens (Human).